Here is a 260-residue protein sequence, read N- to C-terminus: tRNA (guanine-N(1)-)-methyltransferase (260 aa).

Residues glycine 117 and 137-142 (LGDFVL) each bind S-adenosyl-L-methionine.

The protein belongs to the RNA methyltransferase TrmD family. In terms of assembly, homodimer.

The protein localises to the cytoplasm. It carries out the reaction guanosine(37) in tRNA + S-adenosyl-L-methionine = N(1)-methylguanosine(37) in tRNA + S-adenosyl-L-homocysteine + H(+). Its function is as follows. Specifically methylates guanosine-37 in various tRNAs. The chain is tRNA (guanine-N(1)-)-methyltransferase from Cupriavidus metallidurans (strain ATCC 43123 / DSM 2839 / NBRC 102507 / CH34) (Ralstonia metallidurans).